A 229-amino-acid polypeptide reads, in one-letter code: NADH dehydrogenase [ubiquinone] iron-sulfur protein 8, mitochondrial (229 aa).

The N-terminal 41 residues, 1-41 (MAAILARKSLSALRSRQLVLAGHTIEGTNGYNRTLLGTRSF), are a transit peptide targeting the mitochondrion. 4Fe-4S ferredoxin-type domains lie at 121-150 (RRYATGEERCIACKLCEAICPAQAITIEAE) and 160-189 (TRYDIDMTKCIYCGFCQEACPVDAIVEGPN). C130, C133, C136, C140, C169, C172, C175, and C179 together coordinate [4Fe-4S] cluster.

Belongs to the complex I 23 kDa subunit family. In terms of assembly, complex I is composed of about 45 different subunits. This is a component of the iron-sulfur (IP) fragment of the enzyme. [4Fe-4S] cluster is required as a cofactor. As to expression, lowest expression found in storage tissues of tubers. Higher expression in older leaves than younger ones. Highest expression found in flowers.

The protein resides in the mitochondrion inner membrane. The catalysed reaction is a ubiquinone + NADH + 5 H(+)(in) = a ubiquinol + NAD(+) + 4 H(+)(out). Its function is as follows. Core subunit of the mitochondrial membrane respiratory chain NADH dehydrogenase (Complex I) that is believed to belong to the minimal assembly required for catalysis. Complex I functions in the transfer of electrons from NADH to the respiratory chain. The immediate electron acceptor for the enzyme is believed to be ubiquinone. May donate electrons to ubiquinone. This is NADH dehydrogenase [ubiquinone] iron-sulfur protein 8, mitochondrial from Solanum tuberosum (Potato).